The primary structure comprises 356 residues: MRVYPTFFKLAFSWMDAERAHTLGFKGIRLAHATGAGRVLRKLTAPAPSLQTTAFGITFPSPFGLAAGFDKEGHGIEALTELGFGHVEVGTITGQAQPGNEQPRLFRLIEDRAVINRMGFNNDGAAAVAPRLKSARAALQRTYPAVRPVIGVNIGKTKVVELADAVDDYRISARTLAPAADYLVVNVSSPNTPGLRLLQDVETLRPLLTAVGEEADRAAGRHVPLLVKIAPDLSDEDIDDVARLALDLKLDGIIATNTTIARTGLASPAEKVEQCGAGGLSGAPLKKRSLEVLRRLKQATGDALTLIAVGGVETAQDVQDRLDAGATLVQGYTAFLYEGPFWAARINRQLARSRRS.

FMN-binding positions include 67–71 (AGFDK) and threonine 91. Residue lysine 71 participates in substrate binding. 116–120 (NRMGF) is a binding site for substrate. FMN-binding residues include asparagine 153 and asparagine 186. Asparagine 186 is a substrate binding site. The active-site Nucleophile is serine 189. Asparagine 191 lines the substrate pocket. FMN contacts are provided by lysine 228 and threonine 256. 257–258 (NT) is a binding site for substrate. FMN is bound by residues glycine 282, glycine 311, and 332 to 333 (YT).

This sequence belongs to the dihydroorotate dehydrogenase family. Type 2 subfamily. As to quaternary structure, monomer. FMN serves as cofactor.

Its subcellular location is the cell membrane. The enzyme catalyses (S)-dihydroorotate + a quinone = orotate + a quinol. It functions in the pathway pyrimidine metabolism; UMP biosynthesis via de novo pathway; orotate from (S)-dihydroorotate (quinone route): step 1/1. Catalyzes the conversion of dihydroorotate to orotate with quinone as electron acceptor. This Pseudarthrobacter chlorophenolicus (strain ATCC 700700 / DSM 12829 / CIP 107037 / JCM 12360 / KCTC 9906 / NCIMB 13794 / A6) (Arthrobacter chlorophenolicus) protein is Dihydroorotate dehydrogenase (quinone).